The following is a 402-amino-acid chain: Na(+)/H(+) antiporter NhaA 2 (402 aa).

The next 11 helical transmembrane spans lie at 18-38, 63-83, 99-119, 129-149, 158-178, 182-202, 210-230, 258-278, 296-316, 329-349, and 365-385; these read AGGIVLMFAAVLALIFANTAL, ALLWINDGLMAVFFFLVGLEV, SLPLIAAFGGIVLPALVFYGI, GWAIPAATDIAFALGILALLG, ALLLAIAVIDDIAAIAIIAIF, GVELAMLGAAAITLLILSAFG, IPYIVLGIVLWYFVLKSGVHA, ALHSWVAFLVVPIFALANAGV, IALGLIVGKQVGIFGFAWLAV, WLQVWGLSLVAGIGFTMSLFI, and IGVLSGSLIAALVGIAILVLG.

The protein belongs to the NhaA Na(+)/H(+) (TC 2.A.33) antiporter family.

The protein resides in the cell inner membrane. The enzyme catalyses Na(+)(in) + 2 H(+)(out) = Na(+)(out) + 2 H(+)(in). Its function is as follows. Na(+)/H(+) antiporter that extrudes sodium in exchange for external protons. This Erythrobacter litoralis (strain HTCC2594) protein is Na(+)/H(+) antiporter NhaA 2.